The sequence spans 190 residues: GTP cyclohydrolase 1 (190 aa).

Positions 78, 81, and 150 each coordinate Zn(2+).

The protein belongs to the GTP cyclohydrolase I family. Toroid-shaped homodecamer, composed of two pentamers of five dimers.

The enzyme catalyses GTP + H2O = 7,8-dihydroneopterin 3'-triphosphate + formate + H(+). It participates in cofactor biosynthesis; 7,8-dihydroneopterin triphosphate biosynthesis; 7,8-dihydroneopterin triphosphate from GTP: step 1/1. K(+) ions moderately increases the Vmax, whereas UTP and Ca(2+) and Mg(2+) ions drastically increase the Km for GTP. This chain is GTP cyclohydrolase 1 (folE), found in Bacillus subtilis (strain 168).